Consider the following 428-residue polypeptide: Gamma-glutamyl phosphate reductase (428 aa).

Belongs to the gamma-glutamyl phosphate reductase family.

The protein localises to the cytoplasm. The catalysed reaction is L-glutamate 5-semialdehyde + phosphate + NADP(+) = L-glutamyl 5-phosphate + NADPH + H(+). It participates in amino-acid biosynthesis; L-proline biosynthesis; L-glutamate 5-semialdehyde from L-glutamate: step 2/2. Functionally, catalyzes the NADPH-dependent reduction of L-glutamate 5-phosphate into L-glutamate 5-semialdehyde and phosphate. The product spontaneously undergoes cyclization to form 1-pyrroline-5-carboxylate. The protein is Gamma-glutamyl phosphate reductase of Streptomyces avermitilis (strain ATCC 31267 / DSM 46492 / JCM 5070 / NBRC 14893 / NCIMB 12804 / NRRL 8165 / MA-4680).